We begin with the raw amino-acid sequence, 539 residues long: GMP synthase [glutamine-hydrolyzing] (539 aa).

The region spanning 4 to 202 is the Glutamine amidotransferase type-1 domain; the sequence is KILILDFGSQ…VLQIAGAKPD (199 aa). Cys-81 functions as the Nucleophile in the catalytic mechanism. Catalysis depends on residues His-176 and Glu-178. Residues 203–395 enclose the GMPS ATP-PPase domain; it reads WIMKNHIEEA…LGLPPEMVYR (193 aa). 230 to 236 is an ATP binding site; that stretch reads SGGVDSS.

In terms of assembly, homodimer.

It carries out the reaction XMP + L-glutamine + ATP + H2O = GMP + L-glutamate + AMP + diphosphate + 2 H(+). It functions in the pathway purine metabolism; GMP biosynthesis; GMP from XMP (L-Gln route): step 1/1. Its function is as follows. Catalyzes the synthesis of GMP from XMP. The sequence is that of GMP synthase [glutamine-hydrolyzing] from Burkholderia cenocepacia (strain ATCC BAA-245 / DSM 16553 / LMG 16656 / NCTC 13227 / J2315 / CF5610) (Burkholderia cepacia (strain J2315)).